Consider the following 1088-residue polypeptide: RNA-directed RNA polymerase (1088 aa).

The RdRp catalytic domain maps to 501-687 (LSYGDVTRFL…AKRYIAGGKI (187 aa)).

The protein belongs to the reoviridae RNA-directed RNA polymerase family. In terms of assembly, interacts with VP3 (Potential). Interacts with VP2; this interaction activates VP1. Interacts with NSP5; this interaction is probably necessary for the formation of functional virus factories. Interacts with NSP2; this interaction is weak. It depends on Mg(2+) as a cofactor.

Its subcellular location is the virion. The enzyme catalyses RNA(n) + a ribonucleoside 5'-triphosphate = RNA(n+1) + diphosphate. In terms of biological role, RNA-directed RNA polymerase that is involved in both transcription and genome replication. Together with VP3 capping enzyme, forms an enzyme complex positioned near the channels situated at each of the five-fold vertices of the core. Following infection, the outermost layer of the virus is lost, leaving a double-layered particle (DLP) made up of the core and VP6 shell. VP1 then catalyzes the transcription of fully conservative plus-strand genomic RNAs that are extruded through the DLP's channels into the cytoplasm where they function as mRNAs for translation of viral proteins. One copy of each of the viral (+)RNAs is also recruited during core assembly, together with newly synthesized polymerase complexes and VP2. The polymerase of these novo-formed particles catalyzes the synthesis of complementary minus-strands leading to dsRNA formation. To do so, the polymerase specifically recognizes and binds 4 bases 5'-UGUG-3' in the conserved 3'-sequence of plus-strand RNA templates. VP2 presumably activates the autoinhibited VP1-RNA complex to coordinate packaging and genome replication. Once dsRNA synthesis is complete, the polymerase switches to the transcriptional mode, thus providing secondary transcription. In Homo sapiens (Human), this protein is RNA-directed RNA polymerase.